Reading from the N-terminus, the 256-residue chain is Phosphate import ATP-binding protein PstB (256 aa).

In terms of domain architecture, ABC transporter spans 10–251; that stretch reads IRTVNVNFYY…PEQKQTEDYI (242 aa). Residue 42–49 coordinates ATP; sequence GPSGCGKS.

This sequence belongs to the ABC transporter superfamily. Phosphate importer (TC 3.A.1.7) family. As to quaternary structure, the complex is composed of two ATP-binding proteins (PstB), two transmembrane proteins (PstC and PstA) and a solute-binding protein (PstS).

It localises to the cell inner membrane. The catalysed reaction is phosphate(out) + ATP + H2O = ADP + 2 phosphate(in) + H(+). In terms of biological role, part of the ABC transporter complex PstSACB involved in phosphate import. Responsible for energy coupling to the transport system. The sequence is that of Phosphate import ATP-binding protein PstB from Syntrophus aciditrophicus (strain SB).